A 258-amino-acid polypeptide reads, in one-letter code: Imidazole glycerol phosphate synthase subunit HisF (258 aa).

Residues aspartate 11 and aspartate 130 contribute to the active site.

It belongs to the HisA/HisF family. In terms of assembly, heterodimer of HisH and HisF.

It localises to the cytoplasm. It catalyses the reaction 5-[(5-phospho-1-deoxy-D-ribulos-1-ylimino)methylamino]-1-(5-phospho-beta-D-ribosyl)imidazole-4-carboxamide + L-glutamine = D-erythro-1-(imidazol-4-yl)glycerol 3-phosphate + 5-amino-1-(5-phospho-beta-D-ribosyl)imidazole-4-carboxamide + L-glutamate + H(+). It functions in the pathway amino-acid biosynthesis; L-histidine biosynthesis; L-histidine from 5-phospho-alpha-D-ribose 1-diphosphate: step 5/9. In terms of biological role, IGPS catalyzes the conversion of PRFAR and glutamine to IGP, AICAR and glutamate. The HisF subunit catalyzes the cyclization activity that produces IGP and AICAR from PRFAR using the ammonia provided by the HisH subunit. The polypeptide is Imidazole glycerol phosphate synthase subunit HisF (Yersinia enterocolitica serotype O:8 / biotype 1B (strain NCTC 13174 / 8081)).